Reading from the N-terminus, the 431-residue chain is Enolase (431 aa).

Residue Gln-167 participates in (2R)-2-phosphoglycerate binding. The active-site Proton donor is Glu-209. 3 residues coordinate Mg(2+): Asp-246, Glu-289, and Asp-316. Residues Lys-341, Arg-370, Ser-371, and Lys-392 each coordinate (2R)-2-phosphoglycerate. Lys-341 acts as the Proton acceptor in catalysis.

Belongs to the enolase family. In terms of assembly, component of the RNA degradosome, a multiprotein complex involved in RNA processing and mRNA degradation. The cofactor is Mg(2+).

It localises to the cytoplasm. The protein resides in the secreted. Its subcellular location is the cell surface. It carries out the reaction (2R)-2-phosphoglycerate = phosphoenolpyruvate + H2O. It functions in the pathway carbohydrate degradation; glycolysis; pyruvate from D-glyceraldehyde 3-phosphate: step 4/5. In terms of biological role, catalyzes the reversible conversion of 2-phosphoglycerate (2-PG) into phosphoenolpyruvate (PEP). It is essential for the degradation of carbohydrates via glycolysis. The protein is Enolase of Shewanella pealeana (strain ATCC 700345 / ANG-SQ1).